Here is a 454-residue protein sequence, read N- to C-terminus: Enolase (454 aa).

Q167 contributes to the (2R)-2-phosphoglycerate binding site. E209 serves as the catalytic Proton donor. D250, E312, and D339 together coordinate Mg(2+). (2R)-2-phosphoglycerate-binding residues include K364, R393, S394, and K415. K364 acts as the Proton acceptor in catalysis.

This sequence belongs to the enolase family. Mg(2+) is required as a cofactor.

It localises to the cytoplasm. The protein resides in the secreted. The protein localises to the cell surface. The catalysed reaction is (2R)-2-phosphoglycerate = phosphoenolpyruvate + H2O. Its pathway is carbohydrate degradation; glycolysis; pyruvate from D-glyceraldehyde 3-phosphate: step 4/5. Catalyzes the reversible conversion of 2-phosphoglycerate (2-PG) into phosphoenolpyruvate (PEP). It is essential for the degradation of carbohydrates via glycolysis. This chain is Enolase, found in Mycoplasmopsis agalactiae (strain NCTC 10123 / CIP 59.7 / PG2) (Mycoplasma agalactiae).